The following is a 137-amino-acid chain: Glutamate mutase sigma subunit (137 aa).

Residues 3–137 (KKTIVLGVIG…ADLKKDLNIE (135 aa)) form the B12-binding domain. Residues 13-17 (SDCHA), His-16, 61-63 (SSL), and 93-97 (NIVVG) each bind adenosylcob(III)alamin.

Belongs to the methylaspartate mutase GlmS subunit family. Heterotetramer composed of 2 epsilon subunits (GlmE) and 2 sigma subunits (GlmS). GlmE exists as a homodimer and GlmS as a monomer. Adenosylcob(III)alamin serves as cofactor.

It catalyses the reaction (2S,3S)-3-methyl-L-aspartate = L-glutamate. Its pathway is amino-acid degradation; L-glutamate degradation via mesaconate pathway; acetate and pyruvate from L-glutamate: step 1/4. Its activity is regulated as follows. Competitively inhibited by (2S,4S)-4-fluoroglutamate, 2-methyleneglutarate, (2R,3RS)-3-fluoroglutamate and (S)-3-methylitaconate. Functionally, catalyzes the carbon skeleton rearrangement of L-glutamate to L-threo-3-methylaspartate ((2S,3S)-3-methylaspartate). The protein is Glutamate mutase sigma subunit of Clostridium cochlearium.